We begin with the raw amino-acid sequence, 552 residues long: Hyaluronan synthase 2 (552 aa).

The Cytoplasmic segment spans residues methionine 1–arginine 11. The helical transmembrane segment at isoleucine 12–valine 32 threads the bilayer. At glycine 33–serine 45 the chain is on the extracellular side. The chain crosses the membrane as a helical span at residues phenylalanine 46–leucine 66. Topologically, residues glutamate 67–leucine 374 are cytoplasmic. Position 110 is a phosphothreonine (threonine 110). Residue lysine 190 forms a Glycyl lysine isopeptide (Lys-Gly) (interchain with G-Cter in ubiquitin) linkage. Residue serine 221 is glycosylated (O-linked (GlcNAc) serine). Threonine 328 is subject to Phosphothreonine. Residues tryptophan 375–isoleucine 395 traverse the membrane as a helical segment. Topologically, residues glutamine 396–lysine 402 are extracellular. A helical membrane pass occupies residues isoleucine 403–phenylalanine 423. Residues alanine 424 to glycine 429 are Cytoplasmic-facing. Residues asparagine 430–alanine 450 traverse the membrane as a helical segment. Residues lysine 451–phenylalanine 475 lie on the Extracellular side of the membrane. The chain crosses the membrane as a helical span at residues isoleucine 476–isoleucine 496. The Cytoplasmic segment spans residues tyrosine 497–threonine 510. A helical transmembrane segment spans residues valine 511–valine 531. The Extracellular portion of the chain corresponds to valine 532 to valine 552.

It belongs to the NodC/HAS family. As to quaternary structure, homodimer; dimerization promotes enzymatic activity. Forms heterodimer with HAS3. Forms heterodimer with HAS1. Requires Mg(2+) as cofactor. Phosphorylation at Thr-328 is essential for hyaluronan synthase activity. Phosphorylation at Thr-110 is required for transport from ER to Golgi. In terms of processing, O-GlcNAcylation at Ser-221 increases the stability of HAS2 and plasma membrane localization. Post-translationally, ubiquitination at Lys-190; this ubiquitination is essential for hyaluronan synthase activity and homo- or hetero-oligomerization. Can also be poly-ubiquitinated. Deubiquitinated by USP17 and USP4. USP17 efficiently removes 'Lys-63'- and 'Lys-48'-linked polyubiquitin chains, whereas USP4 preferentially removes monoubiquitination and, partially, both 'Lys-63'- and 'Lys-48'-linked polyubiquitin chain. Expressed in fibroblasts.

The protein resides in the cell membrane. Its subcellular location is the endoplasmic reticulum membrane. The protein localises to the vesicle. It is found in the golgi apparatus membrane. It localises to the lysosome. It carries out the reaction [hyaluronan](n) + UDP-N-acetyl-alpha-D-glucosamine = N-acetyl-beta-D-glucosaminyl-(1-&gt;4)-[hyaluronan](n) + UDP + H(+). It catalyses the reaction N-acetyl-beta-D-glucosaminyl-(1-&gt;4)-[hyaluronan](n) + UDP-alpha-D-glucuronate = [hyaluronan](n+1) + UDP + H(+). Its pathway is glycan biosynthesis; hyaluronan biosynthesis. With respect to regulation, regulated by several post-translational modifications such as ubiquitination/deubiquitination, phosphorylation and O-GlcNAcylation. The enzymatic activity depends on the availability of UDP-GlcUA and UDP-GlcNAc. In terms of biological role, catalyzes the addition of GlcNAc or GlcUA monosaccharides to the nascent hyaluronan polymer. Therefore, it is essential to hyaluronan synthesis a major component of most extracellular matrices that has a structural role in tissues architectures and regulates cell adhesion, migration and differentiation. This is one of three isoenzymes responsible for cellular hyaluronan synthesis and it is particularly responsible for the synthesis of high molecular mass hyaluronan. This Homo sapiens (Human) protein is Hyaluronan synthase 2.